Reading from the N-terminus, the 427-residue chain is Peptidase B (427 aa).

Positions 195 and 200 each coordinate Mn(2+). Residue Lys207 is part of the active site. The Mn(2+) site is built by Asp218, Asp277, and Glu279. Residue Arg281 is part of the active site.

Belongs to the peptidase M17 family. As to quaternary structure, homohexamer. Requires Mn(2+) as cofactor.

It localises to the cytoplasm. The catalysed reaction is Release of an N-terminal amino acid, Xaa, from a peptide or arylamide. Xaa is preferably Glu or Asp but may be other amino acids, including Leu, Met, His, Cys and Gln.. Its function is as follows. Probably plays an important role in intracellular peptide degradation. The chain is Peptidase B from Escherichia coli (strain SMS-3-5 / SECEC).